We begin with the raw amino-acid sequence, 209 residues long: Glutathione S-transferase F7 (209 aa).

The GST N-terminal domain occupies 2–83 (AGIKVFGHPA…YIAHFYSDKG (82 aa)). Glutathione contacts are provided by residues 12 to 13 (ST), 41 to 42 (HK), 54 to 55 (KV), and 67 to 68 (ES). Residues 90 to 209 (GSKDIAGIAM…TSRPSAKKVL (120 aa)) form the GST C-terminal domain.

Belongs to the GST superfamily. Phi family.

Its subcellular location is the cytoplasm. It is found in the cytosol. The enzyme catalyses RX + glutathione = an S-substituted glutathione + a halide anion + H(+). Functionally, may be involved in the conjugation of reduced glutathione to a wide number of exogenous and endogenous hydrophobic electrophiles and have a detoxification role against certain herbicides. This is Glutathione S-transferase F7 from Arabidopsis thaliana (Mouse-ear cress).